Here is a 328-residue protein sequence, read N- to C-terminus: DNA-directed RNA polymerase subunit alpha (328 aa).

Positions 1–230 (MNKIKITPSV…QSQMEIFTND (230 aa)) are alpha N-terminal domain (alpha-NTD). The interval 243–328 (NSEIFYQPLD…ILKKIEQNKS (86 aa)) is alpha C-terminal domain (alpha-CTD).

It belongs to the RNA polymerase alpha chain family. Homodimer. The RNAP catalytic core consists of 2 alpha, 1 beta, 1 beta' and 1 omega subunit. When a sigma factor is associated with the core the holoenzyme is formed, which can initiate transcription.

The enzyme catalyses RNA(n) + a ribonucleoside 5'-triphosphate = RNA(n+1) + diphosphate. Its function is as follows. DNA-dependent RNA polymerase catalyzes the transcription of DNA into RNA using the four ribonucleoside triphosphates as substrates. The protein is DNA-directed RNA polymerase subunit alpha of Nitratiruptor sp. (strain SB155-2).